We begin with the raw amino-acid sequence, 443 residues long: Crinkler effector protein 161 (443 aa).

The signal sequence occupies residues Met-1–Gln-17. Positions Val-18–Lys-56 are LQLFLAK domain. The interval Glu-57 to Ile-126 is DWL domain. The short motif at His-127–Pro-133 is the HVLVXXP motif element. Positions Glu-134–Asn-439 are effector domain. Short sequence motifs (nuclear localization signal) lie at residues Ala-161 to His-170 and His-384 to Ser-393.

The protein belongs to the Crinkler effector family.

It localises to the secreted. Its subcellular location is the host nucleus. Secreted effector that exhibits strong cell death suppression activity and suppresses cell death induced by a variety of effectors including CRN63, Avh241 and Avr3a. Protects host plants from biotic and abiotic stresses such as salinity and drought by up-regulation of many defense-related genes, including ABC transporters, Cytochrome P450 monooxygenases and receptor-like kinases (RLKs). Also enhances resistance to Phytophtora pathogens. This Phytophthora sojae (strain P6497) (Soybean stem and root rot agent) protein is Crinkler effector protein 161.